We begin with the raw amino-acid sequence, 85 residues long: RNA-binding protein Hfq (85 aa).

The region spanning 9–68 (DPFLNALRRERIPVSIYLVNGIKLQGQIESFDQFVILLKNTVNQMVYKHAISTVVPARPV) is the Sm domain. The interval 66 to 85 (RPVNHHHASDRPATLEKTEE) is disordered. The segment covering 72–85 (HASDRPATLEKTEE) has biased composition (basic and acidic residues).

The protein belongs to the Hfq family. As to quaternary structure, homohexamer.

RNA chaperone that binds small regulatory RNA (sRNAs) and mRNAs to facilitate mRNA translational regulation in response to envelope stress, environmental stress and changes in metabolite concentrations. Also binds with high specificity to tRNAs. The polypeptide is RNA-binding protein Hfq (Photobacterium profundum (strain SS9)).